A 517-amino-acid polypeptide reads, in one-letter code: DNA-binding protein (517 aa).

Residues 1–10 show a composition bias toward polar residues; that stretch reads MASRGGNQSS. A disordered region spans residues 1 to 110; the sequence is MASRGGNQSS…DISQDSEEER (110 aa). Low complexity predominate over residues 64–80; the sequence is VLVSETSRSSLSPERSN. The segment covering 87-96 has biased composition (basic residues); it reads PKKKPRKTKH. Y180 is subject to Phosphotyrosine; by host. The Zn(2+) site is built by C269 and H271. The flexible loop stretch occupies residues 282–316; the sequence is IEMDVASENGQRAMKENPDRAKITQNRWGRNVVQL. Zn(2+) contacts are provided by C324, C340, C382, C384, C436, and C453. The tract at residues 501-517 is C-terminal arm, DBP binding; the sequence is VSLPAGHYDSRQNPFDF.

This sequence belongs to the adenoviridae E2A DNA-binding protein family. Homomultimerizes on viral ssDNA bound to pTP. Forms a initiation complex with viral polymerase, pTP and hosts NFIA and POU2F1/OCT1. Interacts with host SRCAP.

The protein localises to the host nucleus. Plays a role in the elongation phase of viral strand displacement replication by unwinding the template in an ATP-independent fashion, employing its capacity to form multimers. Also enhances the rate of initiation. Released from template upon second strand synthesis. Assembles in complex with viral pTP, viral pol, host NFIA and host POU2F1/OCT1 on viral origin of replication. Covers the whole ssDNA genome during synthesis. The complementary strand synthesis induces its relese from DNA template. May inhibit cellular transcription mediated by the interaction between host SRCAP and CBP. The protein is DNA-binding protein of Human adenovirus B serotype 7 (HAdV-7).